We begin with the raw amino-acid sequence, 605 residues long: Progranulin (605 aa).

Positions 1-17 are cleaved as a signal peptide; it reads MWTLVGWTILVAGLVAG. Intrachain disulfides connect Cys126/Cys139 and Cys133/Cys149. Residue Asn197 is glycosylated (N-linked (GlcNAc...) asparagine). Cystine bridges form between Cys297–Cys309, Cys303–Cys319, Cys310–Cys327, Cys320–Cys334, Cys328–Cys341, and Cys335–Cys348. The interval 359–386 is disordered; sequence QKTPAQPSRPSQPSPPGPPGPPSPPGPL. Residues 368-385 show a composition bias toward pro residues; sequence PSQPSPPGPPGPPSPPGP. 2 disulfide bridges follow: Cys392–Cys404 and Cys398–Cys414.

Belongs to the granulin family. Progranulin is secreted as a homodimer. Interacts with SLPI; interaction protects progranulin from proteolysis. Interacts (via region corresponding to granulin-7 peptide) with CTSD; stabilizes CTSD and increases its proteolytic activity. Interacts (via region corresponding to granulin-7 peptide) with SORT1; this interaction mediates endocytosis and lysosome delivery of progranulin; interaction occurs at the neuronal cell surface in a stressed nervous system. Interacts with PSAP; facilitates lysosomal delivery of progranulin from the extracellular space and the biosynthetic pathway. Forms a complex with PSAP and M6PR; PSAP bridges the binding between progranulin and M6PR. Forms a complex with PSAP and SORT1; progranulin bridges the interaction between PSAP and SORT1; facilitates lysosomal targeting of PSAP via SORT1; interaction enhances PSAP uptake in primary cortical neurons. Interacts (via regions corresponding to granulin-2 and granulin-7 peptides) with GBA1; this interaction prevents aggregation of GBA1-SCARB2 complex via interaction with HSPA1A upon stress. Interacts (via region corresponding to granulin-7 peptide) with HSPA1A; mediates recruitment of HSPA1A to GBA1 and prevents GBA1 aggregation in response to stress. Post-translationally, cleaved by ELANE; proteolysis is blocked by SLPI and is concentration- and time-dependent and induces CXCL8/IL-8 production; granulin-3 and granulin-4 are resistant to ELANE. Cleaved by CTSL in lysosome thus regulating the maturation and turnover of progranulin within the lysosome.

The protein resides in the secreted. It localises to the lysosome. Secreted protein that acts as a key regulator of lysosomal function and as a growth factor involved in inflammation, wound healing and cell proliferation. Regulates protein trafficking to lysosomes, and also the activity of lysosomal enzymes. Also facilitates the acidification of lysosomes, causing degradation of mature CTSD by CTSB. In addition, functions as a wound-related growth factor that acts directly on dermal fibroblasts and endothelial cells to promote division, migration and the formation of capillary-like tubule structures. Also promotes epithelial cell proliferation by blocking TNF-mediated neutrophil activation preventing release of oxidants and proteases. Moreover, modulates inflammation in neurons by preserving neurons survival, axonal outgrowth and neuronal integrity. In terms of biological role, inhibits epithelial cell proliferation and induces epithelial cells to secrete IL-8. Its function is as follows. Stabilizes CTSD through interaction with CTSD leading to maintain its aspartic-type peptidase activity. The protein is Progranulin (GRN) of Cavia porcellus (Guinea pig).